The sequence spans 818 residues: ATM interactor (818 aa).

A compositionally biased stretch (low complexity) spans 1 to 34 (MAATEAAAADSAGPAPGVPATPASTRGAAAASSP). The tract at residues 1–62 (MAATEAAAAD…RAAAPVPPAR (62 aa)) is disordered. Residues 80-105 (ILCTVRGCGKILPNSPALNMHLVKSH) form a C2H2-type 1 zinc finger. The C2H2-type 2; degenerate zinc finger occupies 161 to 181 (HKCSKCSNSYGTEWDLKRHEE). Basic and acidic residues predominate over residues 210-221 (HEIPAEHRDPPS). 2 disordered regions span residues 210–284 (HEIP…ATPP) and 603–625 (DNRSLLSDTNPGPDAQLPAGSAQ). A required for formation of RAD51 foci region spans residues 219 to 437 (PPSKKRKMES…PDSSVSSCSQ (219 aa)). Polar residues-rich tracts occupy residues 229-243 (YLQNQKLSSKTTEPL) and 603-612 (DNRSLLSDTN).

In terms of assembly, interacts via its C-terminus with ATM. Interacts with DYNLL; this interaction inhibits ATMIN transcriptional activity and hence may play a role in a feedback loop whereby DYNLL1 inhibits transactivation of its own promoter by ATMIN. ATMIN.

The protein resides in the nucleus. In terms of biological role, transcription factor. Plays a crucial role in cell survival and RAD51 foci formation in response to methylating DNA damage. Involved in regulating the activity of ATM in the absence of DNA damage. May play a role in stabilizing ATM. Binds to the DYNLL1 promoter and activates its transcription. This Mus musculus (Mouse) protein is ATM interactor.